The following is an 88-amino-acid chain: Co-chaperonin GroES (88 aa).

This sequence belongs to the GroES chaperonin family. As to quaternary structure, heptamer of 7 subunits arranged in a ring. Interacts with the chaperonin GroEL.

It localises to the cytoplasm. In terms of biological role, together with the chaperonin GroEL, plays an essential role in assisting protein folding. The GroEL-GroES system forms a nano-cage that allows encapsulation of the non-native substrate proteins and provides a physical environment optimized to promote and accelerate protein folding. GroES binds to the apical surface of the GroEL ring, thereby capping the opening of the GroEL channel. This chain is Co-chaperonin GroES, found in Thermodesulfovibrio yellowstonii (strain ATCC 51303 / DSM 11347 / YP87).